Reading from the N-terminus, the 436-residue chain is GTPase Der (436 aa).

2 EngA-type G domains span residues 3–167 and 177–352; these read NIVA…PIKP and PRFA…ENRQ. GTP is bound by residues 9–16, 56–60, 119–122, 183–190, 230–234, and 295–298; these read GRPNVGKS, DTGGY, NKVD, GRPNAGKS, DTAGI, and NKWD. A KH-like domain is found at 353-436; it reads QRISTSKFNE…VPIDIYIREK (84 aa).

This sequence belongs to the TRAFAC class TrmE-Era-EngA-EngB-Septin-like GTPase superfamily. EngA (Der) GTPase family. Associates with the 50S ribosomal subunit.

Functionally, GTPase that plays an essential role in the late steps of ribosome biogenesis. This chain is GTPase Der, found in Flavobacterium psychrophilum (strain ATCC 49511 / DSM 21280 / CIP 103535 / JIP02/86).